We begin with the raw amino-acid sequence, 67 residues long: Potassium channel toxin alpha-KTx (67 aa).

An N-terminal signal peptide occupies residues 1-25 (MKNIAMKTTVVLTILLLSVLTAINA). Positions 26-31 (DTMKKR) are excised as a propeptide. 4 disulfide bridges follow: C35/C54, C40/C59, C44/C61, and C49/C64.

It belongs to the short scorpion toxin superfamily. Potassium channel inhibitor family. In terms of tissue distribution, expressed by the venom gland.

The protein localises to the secreted. Functionally, blocks Kv1.1/KCNA1, Kv1.2/KCNA2 and Kv1.3/KCNA3 voltage-gated potassium channels. In Hoffmannihadrurus gertschi (Scorpion), this protein is Potassium channel toxin alpha-KTx.